The chain runs to 184 residues: NADH-quinone oxidoreductase subunit B (184 aa).

[4Fe-4S] cluster contacts are provided by C63, C64, C128, and C158.

Belongs to the complex I 20 kDa subunit family. As to quaternary structure, NDH-1 is composed of 14 different subunits. Subunits NuoB, C, D, E, F, and G constitute the peripheral sector of the complex. [4Fe-4S] cluster serves as cofactor.

The protein resides in the cell inner membrane. It catalyses the reaction a quinone + NADH + 5 H(+)(in) = a quinol + NAD(+) + 4 H(+)(out). Its function is as follows. NDH-1 shuttles electrons from NADH, via FMN and iron-sulfur (Fe-S) centers, to quinones in the respiratory chain. The immediate electron acceptor for the enzyme in this species is believed to be ubiquinone. Couples the redox reaction to proton translocation (for every two electrons transferred, four hydrogen ions are translocated across the cytoplasmic membrane), and thus conserves the redox energy in a proton gradient. The protein is NADH-quinone oxidoreductase subunit B of Xylella fastidiosa (strain M12).